The sequence spans 361 residues: Peptide chain release factor 1 (361 aa).

Glutamine 237 carries the post-translational modification N5-methylglutamine.

This sequence belongs to the prokaryotic/mitochondrial release factor family. In terms of processing, methylated by PrmC. Methylation increases the termination efficiency of RF1.

It is found in the cytoplasm. Functionally, peptide chain release factor 1 directs the termination of translation in response to the peptide chain termination codons UAG and UAA. The polypeptide is Peptide chain release factor 1 (Thioalkalivibrio sulfidiphilus (strain HL-EbGR7)).